We begin with the raw amino-acid sequence, 470 residues long: Asparagine--tRNA ligase (470 aa).

This sequence belongs to the class-II aminoacyl-tRNA synthetase family. Homodimer.

It is found in the cytoplasm. It carries out the reaction tRNA(Asn) + L-asparagine + ATP = L-asparaginyl-tRNA(Asn) + AMP + diphosphate + H(+). The sequence is that of Asparagine--tRNA ligase from Blochmanniella floridana.